Reading from the N-terminus, the 336-residue chain is Ketol-acid reductoisomerase (NADP(+)) (336 aa).

In terms of domain architecture, KARI N-terminal Rossmann spans 5–185 (SKIYTDKDSN…GATRAGVIPT (181 aa)). NADP(+) is bound by residues 28 to 31 (YGSQ), serine 56, and 86 to 89 (DMVQ). The active site involves histidine 111. Glycine 137 contributes to the NADP(+) binding site. Positions 186 to 331 (TFKEETETDL…NQLKDLIQKG (146 aa)) constitute a KARI C-terminal knotted domain. Mg(2+)-binding residues include aspartate 194, glutamate 198, glutamate 230, and glutamate 234. Serine 255 contacts substrate.

Belongs to the ketol-acid reductoisomerase family. It depends on Mg(2+) as a cofactor.

The enzyme catalyses (2R)-2,3-dihydroxy-3-methylbutanoate + NADP(+) = (2S)-2-acetolactate + NADPH + H(+). It catalyses the reaction (2R,3R)-2,3-dihydroxy-3-methylpentanoate + NADP(+) = (S)-2-ethyl-2-hydroxy-3-oxobutanoate + NADPH + H(+). Its pathway is amino-acid biosynthesis; L-isoleucine biosynthesis; L-isoleucine from 2-oxobutanoate: step 2/4. It functions in the pathway amino-acid biosynthesis; L-valine biosynthesis; L-valine from pyruvate: step 2/4. Involved in the biosynthesis of branched-chain amino acids (BCAA). Catalyzes an alkyl-migration followed by a ketol-acid reduction of (S)-2-acetolactate (S2AL) to yield (R)-2,3-dihydroxy-isovalerate. In the isomerase reaction, S2AL is rearranged via a Mg-dependent methyl migration to produce 3-hydroxy-3-methyl-2-ketobutyrate (HMKB). In the reductase reaction, this 2-ketoacid undergoes a metal-dependent reduction by NADPH to yield (R)-2,3-dihydroxy-isovalerate. This chain is Ketol-acid reductoisomerase (NADP(+)), found in Saccharolobus islandicus (strain Y.N.15.51 / Yellowstone #2) (Sulfolobus islandicus).